The following is a 1561-amino-acid chain: Rho GTPase-activating protein 190 (1561 aa).

4 consecutive FF domains span residues Y252–K320, Y365–S419, K426–D480, and I482–F547. The region spanning S592–L765 is the pG1 pseudoGTPase domain. The 161-residue stretch at R766–E926 folds into the pG2 pseudoGTPase domain. 5 positions are modified to phosphoserine: S973, S975, S985, S988, and S996. Residues K1054 to C1074 are disordered. Positions A1349–F1552 constitute a Rho-GAP domain.

Negatively regulated by integrin, bsk and Src/Src64B. Functionally, GTPase-activating protein (GAP) for RhoA/Rho1 that plays an essential role in the stability of dorsal branches of mushroom body (MB) neurons. The MB neurons are the center for olfactory learning and memory. Acts by converting RhoA/Rho1 to an inactive GDP-bound state, leading to repress the RhoA/Rho1-Drok-MRLC signaling pathway thereby maintaining axon branch stability. The polypeptide is Rho GTPase-activating protein 190 (RhoGAPp190) (Drosophila melanogaster (Fruit fly)).